The following is a 698-amino-acid chain: Endogenous retrovirus group K member 9 Env polyprotein (698 aa).

The interval 1–47 is disordered; sequence MNPSEMQRKAPPRRRRHRNRAPLTHKMNKMVTSEEQMKLPSTKKAEP. A signal peptide spans 1-89; that stretch reads MNPSEMQRKA…ALMIVSMVVS (89 aa). The segment covering 10-20 has biased composition (basic residues); sequence APPRRRRHRNR. Residues 90-631 lie on the Extracellular side of the membrane; sequence LPMPAGAAAA…NLNPVTWVKT (542 aa). N-linked (GlcNAc...) asparagine glycosylation is found at asparagine 100, asparagine 128, asparagine 153, asparagine 273, asparagine 354, asparagine 371, and asparagine 460. The tract at residues 465-485 is fusion peptide; sequence FIFTLIAVIMGLIAVTATAAV. N-linked (GlcNAc...) asparagine glycans are attached at residues asparagine 506, asparagine 553, asparagine 565, and asparagine 584. The helical transmembrane segment at 632–652 threads the bilayer; it reads IGSTTIINLILILVCLFCLLL. Residues 653 to 698 lie on the Cytoplasmic side of the membrane; it reads VCRCTQQLRRDSDHRERAMMTMAVLSKRKGGNVGKSKRDQIVTVSV.

Belongs to the beta type-B retroviral envelope protein family. HERV class-II K(HML-2) env subfamily. As to quaternary structure, the surface (SU) and transmembrane (TM) proteins form a heterodimer. SU and TM are attached by noncovalent interactions or by a labile interchain disulfide bond. In terms of processing, specific enzymatic cleavages in vivo yield the mature SU and TM proteins.

Its subcellular location is the cell membrane. It localises to the virion. Functionally, retroviral envelope proteins mediate receptor recognition and membrane fusion during early infection. Endogenous envelope proteins may have kept, lost or modified their original function during evolution. This endogenous envelope protein has lost its original fusogenic properties. Its function is as follows. SU mediates receptor recognition. In terms of biological role, TM anchors the envelope heterodimer to the viral membrane through one transmembrane domain. The other hydrophobic domain, called fusion peptide, mediates fusion of the viral membrane with the target cell membrane. The polypeptide is Endogenous retrovirus group K member 9 Env polyprotein (ERVK-9) (Homo sapiens (Human)).